Consider the following 277-residue polypeptide: MSDQQLDCALDLMRRLPPQQIEKNLSDLIDLVPSLCEDLLSSVDQPLKIARDKVVGKDYLLCDYNRDGDSYRSPWSNKYDPPLEDGAMPSARLRKLEVEANNAFDQYRDLYFEGGVSSVYLWDLDHGFAGVILIKKAGDGSKKIKGCWDSIHVVEVQEKSSGRTAHYKLTSTVMLWLQTNKTGSGTMNLGGSLTRQMEKDETVSDSSPHIANIGRLVEDMENKIRSTLNEIYFGKTKDIVNGLRSIDAIPDNQKYKQLQRELSQVLTQRQIYIQPDN.

Ser2 is subject to N-acetylserine.

Belongs to the F-actin-capping protein beta subunit family. Component of the F-actin capping complex, composed of a heterodimer of an alpha and a beta subunit. Component of the WASH complex. In terms of assembly, component of the F-actin capping complex, composed of a heterodimer of an alpha and a beta subunit. Subunit of dynactin, a multiprotein complex part of a tripartite complex with dynein and a adapter, such as BICDL1, BICD2 or HOOK3. The dynactin complex is built around ACTR1A/ACTB filament and consists of an actin-related filament composed of a shoulder domain, a pointed end and a barbed end. Its length is defined by its flexible shoulder domain. Isoform 1 is detected in pectoral muscle, cardiac muscle and gizzard. Isoform 2 is detected in brain and liver (at protein level). Isoform 2 is the predominant isoform of nonmuscle tissues and isoform 1 is the predominant isoform of muscle tissues.

The protein localises to the cytoplasm. It is found in the myofibril. It localises to the sarcomere. Its subcellular location is the z line. The protein resides in the i band. The protein localises to the cytoskeleton. Functionally, F-actin-capping proteins bind in a Ca(2+)-independent manner to the fast growing ends of actin filaments (barbed end) thereby blocking the exchange of subunits at these ends. Unlike other capping proteins (such as gelsolin and severin), these proteins do not sever actin filaments. May play a role in the regulation of cell morphology and cytoskeletal organization. Its function is as follows. Forms, with CAPZB, the barbed end of the fast growing ends of actin filaments in the dynactin complex and stabilizes dynactin structure. The dynactin multiprotein complex activates the molecular motor dynein for ultra-processive transport along microtubules. The chain is F-actin-capping protein subunit beta isoforms 1 and 2 (CAPZB) from Gallus gallus (Chicken).